A 539-amino-acid chain; its full sequence is uncharacterized protein (539 aa).

2 consecutive ABC transporter domains span residues 8 to 265 (VRIT…SRAL) and 307 to 537 (IELD…IGDM). 339 to 346 (GDNGSGKS) contributes to the ATP binding site.

It belongs to the ABC transporter superfamily.

The protein localises to the mitochondrion. This is an uncharacterized protein from Saccharomyces cerevisiae (strain ATCC 204508 / S288c) (Baker's yeast).